A 180-amino-acid chain; its full sequence is Calcium-binding protein E (180 aa).

EF-hand domains are found at residues 3 to 38 (KVEA…NSNI), 40 to 76 (DPLA…KKIK), 85 to 120 (ALRS…DPDF), and 139 to 174 (RAKS…HPEF). Asp16, Asp18, Asp20, Asn22, and Glu27 together coordinate Ca(2+). Residues Asp98, Asp100, Asp102, Glu109, Asp152, Asp154, Asn156, Lys158, and Glu163 each contribute to the Ca(2+) site.

This Dictyostelium discoideum (Social amoeba) protein is Calcium-binding protein E (cbpE).